The sequence spans 30 residues: Cyclotide cter-H (30 aa).

Positions 1–30 form a cross-link, cyclopeptide (Gly-Asp); sequence GLPCGESCVFIPCITTVVGCSCKNKVCYND. 3 cysteine pairs are disulfide-bonded: Cys4/Cys20, Cys8/Cys22, and Cys13/Cys27.

Post-translationally, contains 3 disulfide bonds. This is a cyclic peptide.

Its function is as follows. Probably participates in a plant defense mechanism. This Clitoria ternatea (Butterfly pea) protein is Cyclotide cter-H.